Consider the following 35-residue polypeptide: Photosystem II reaction center protein M (35 aa).

The chain crosses the membrane as a helical span at residues 7 to 27 (GFIATILFVLVPTVFLLILYI).

Belongs to the PsbM family. In terms of assembly, PSII is composed of 1 copy each of membrane proteins PsbA, PsbB, PsbC, PsbD, PsbE, PsbF, PsbH, PsbI, PsbJ, PsbK, PsbL, PsbM, PsbT, PsbX, PsbY, PsbZ, Psb30/Ycf12, peripheral proteins PsbO, CyanoQ (PsbQ), PsbU, PsbV and a large number of cofactors. It forms dimeric complexes.

The protein resides in the cellular thylakoid membrane. Functionally, one of the components of the core complex of photosystem II (PSII). PSII is a light-driven water:plastoquinone oxidoreductase that uses light energy to abstract electrons from H(2)O, generating O(2) and a proton gradient subsequently used for ATP formation. It consists of a core antenna complex that captures photons, and an electron transfer chain that converts photonic excitation into a charge separation. This subunit is found at the monomer-monomer interface. The chain is Photosystem II reaction center protein M from Gloeothece citriformis (strain PCC 7424) (Cyanothece sp. (strain PCC 7424)).